The sequence spans 506 residues: Beta-glucosidase 9 (506 aa).

The first 22 residues, 1 to 22 (MKHFSLLFIFLVILLATSYSDA), serve as a signal peptide directing secretion. Residues Q42, H139, and 184–185 (NE) each bind a beta-D-glucoside. The active-site Proton donor is E185. A disulfide bond links C204 and C212. N-linked (GlcNAc...) asparagine glycosylation is found at N211 and N216. An a beta-D-glucoside-binding site is contributed by Y328. Residue N363 is glycosylated (N-linked (GlcNAc...) asparagine). A beta-D-glucoside is bound at residue E396. E396 functions as the Nucleophile in the catalytic mechanism. N429 is a glycosylation site (N-linked (GlcNAc...) asparagine). 2 residues coordinate a beta-D-glucoside: W439 and F455. 3 N-linked (GlcNAc...) asparagine glycosylation sites follow: N461, N483, and N499.

It belongs to the glycosyl hydrolase 1 family.

It catalyses the reaction Hydrolysis of terminal, non-reducing beta-D-glucosyl residues with release of beta-D-glucose.. The chain is Beta-glucosidase 9 from Arabidopsis thaliana (Mouse-ear cress).